Here is a 213-residue protein sequence, read N- to C-terminus: 3,4-dihydroxy-2-butanone 4-phosphate synthase (213 aa).

D-ribulose 5-phosphate contacts are provided by residues Arg-37–Glu-38, Asp-42, Arg-150–Thr-154, and Glu-174. Glu-38 contributes to the Mg(2+) binding site. His-153 contacts Mg(2+).

Belongs to the DHBP synthase family. In terms of assembly, homodimer. The cofactor is Mg(2+). Mn(2+) is required as a cofactor.

It catalyses the reaction D-ribulose 5-phosphate = (2S)-2-hydroxy-3-oxobutyl phosphate + formate + H(+). It participates in cofactor biosynthesis; riboflavin biosynthesis; 2-hydroxy-3-oxobutyl phosphate from D-ribulose 5-phosphate: step 1/1. Its function is as follows. Catalyzes the conversion of D-ribulose 5-phosphate to formate and 3,4-dihydroxy-2-butanone 4-phosphate. In Wigglesworthia glossinidia brevipalpis, this protein is 3,4-dihydroxy-2-butanone 4-phosphate synthase.